We begin with the raw amino-acid sequence, 158 residues long: Cyclic pyranopterin monophosphate synthase (158 aa).

Substrate contacts are provided by residues 74 to 76 (MCH) and 112 to 113 (ME). Asp-127 is an active-site residue.

The protein belongs to the MoaC family. As to quaternary structure, homohexamer; trimer of dimers.

It catalyses the reaction (8S)-3',8-cyclo-7,8-dihydroguanosine 5'-triphosphate = cyclic pyranopterin phosphate + diphosphate. The protein operates within cofactor biosynthesis; molybdopterin biosynthesis. In terms of biological role, catalyzes the conversion of (8S)-3',8-cyclo-7,8-dihydroguanosine 5'-triphosphate to cyclic pyranopterin monophosphate (cPMP). The polypeptide is Cyclic pyranopterin monophosphate synthase (Helicobacter pylori (strain Shi470)).